Consider the following 474-residue polypeptide: 3-isopropylmalate dehydratase large subunit (474 aa).

The tract at residues 293–313 (GTTPGQGIGITEEIPAPEDLP) is disordered. The [4Fe-4S] cluster site is built by Cys-348, Cys-408, and Cys-411.

The protein belongs to the aconitase/IPM isomerase family. LeuC type 1 subfamily. As to quaternary structure, heterodimer of LeuC and LeuD. [4Fe-4S] cluster serves as cofactor.

It catalyses the reaction (2R,3S)-3-isopropylmalate = (2S)-2-isopropylmalate. It functions in the pathway amino-acid biosynthesis; L-leucine biosynthesis; L-leucine from 3-methyl-2-oxobutanoate: step 2/4. Catalyzes the isomerization between 2-isopropylmalate and 3-isopropylmalate, via the formation of 2-isopropylmaleate. The protein is 3-isopropylmalate dehydratase large subunit of Natronomonas pharaonis (strain ATCC 35678 / DSM 2160 / CIP 103997 / JCM 8858 / NBRC 14720 / NCIMB 2260 / Gabara) (Halobacterium pharaonis).